Consider the following 354-residue polypeptide: Serum paraoxonase/arylesterase 2 (354 aa).

Cysteines 42 and 352 form a disulfide. Positions 53 and 54 each coordinate Ca(2+). The active-site Proton acceptor is the H114. Ca(2+) contacts are provided by I116, N167, D168, and N223. N-linked (GlcNAc...) asparagine glycosylation is present at N254. D268 and N269 together coordinate Ca(2+). N269 and N323 each carry an N-linked (GlcNAc...) asparagine glycan.

This sequence belongs to the paraoxonase family. In terms of assembly, homotrimer. Ca(2+) serves as cofactor. The signal sequence is not cleaved. Widely expressed with highest expression in liver, lung, placenta, testis and heart.

It localises to the membrane. The enzyme catalyses a phenyl acetate + H2O = a phenol + acetate + H(+). The catalysed reaction is an N-acyl-L-homoserine lactone + H2O = an N-acyl-L-homoserine + H(+). Capable of hydrolyzing lactones and a number of aromatic carboxylic acid esters. Has antioxidant activity. Is not associated with high density lipoprotein. Prevents LDL lipid peroxidation, reverses the oxidation of mildly oxidized LDL, and inhibits the ability of MM-LDL to induce monocyte chemotaxis. The sequence is that of Serum paraoxonase/arylesterase 2 (PON2) from Homo sapiens (Human).